The chain runs to 305 residues: Oxygen-dependent coproporphyrinogen-III oxidase (305 aa).

A substrate-binding site is contributed by Ser93. Residues His97 and His107 each coordinate a divalent metal cation. His107 (proton donor) is an active-site residue. 109 to 111 (NVR) serves as a coordination point for substrate. The a divalent metal cation site is built by His146 and His176. The tract at residues 241–276 (YVEFNLVFDRGTLFGLQSGGRTESILMSLPPQVRWG) is important for dimerization. 259–261 (GGR) provides a ligand contact to substrate.

Belongs to the aerobic coproporphyrinogen-III oxidase family. In terms of assembly, homodimer. It depends on a divalent metal cation as a cofactor.

Its subcellular location is the cytoplasm. It carries out the reaction coproporphyrinogen III + O2 + 2 H(+) = protoporphyrinogen IX + 2 CO2 + 2 H2O. It participates in porphyrin-containing compound metabolism; protoporphyrin-IX biosynthesis; protoporphyrinogen-IX from coproporphyrinogen-III (O2 route): step 1/1. Its function is as follows. Involved in the heme biosynthesis. Catalyzes the aerobic oxidative decarboxylation of propionate groups of rings A and B of coproporphyrinogen-III to yield the vinyl groups in protoporphyrinogen-IX. In Pseudomonas aeruginosa (strain LESB58), this protein is Oxygen-dependent coproporphyrinogen-III oxidase.